The sequence spans 808 residues: MAGTVVLDDVELREAQRDYLDFLDDEEDQGIYQSKVRELISDNQYRLIVNVNDLRRKNEKRANRLLNNAFEELVAFQRALKDFVASIDATYAKQYEEFYVGLEGSFGSKHVSPRTLTSCFLSCVVCVEGIVTKCSLVRPKVVRSVHYCPATKKTIERRYSDLTTLVAFPSSSVYPTKDEENNPLETEYGLSVYKDHQTITIQEMPEKAPAGQLPRSVDVILDDDLVDKAKPGDRVQVVGTYRCLPGKKGGYTSGTFRTVLIACNVKQMSKDAQPSFSAEDIAKIKKFSKTRSKDIFDQLARSLAPSIHGHDYVKKAILCLLLGGVERDLENGSHIRGDINILLIGDPSVAKSQLLRYVLCTAPRAIPTTGRGSSGVGLTAAVTTDQETGERRLEAGAMVLADRGVVCIDEFDKMSDMDRTAIHEVMEQGRVTIAKAGIHARLNARCSVLAAANPVYGRYDQYKTPMENIGLQDSLLSRFDLLFIMLDQMDPEQDREISDHVLRMHRYRAPGEQDGDAMPLGSAVDILATDDPNFSQEDQQDTQIYEKHDNLLHGTKKKKEKMVSAAFMKKYIHVAKIIKPVLTQESATYIAEEYSRLRSQDSMSSDTARTSPVTARTLETLIRLATAHAKARMSKTVDLQDAEEAVELVQYAYFKKVLEKEKKRKKRSEDESETEDEEEKSQEDQEQKRKRRKTRQSDAKDGDSYDPYDFSDTEEEMPQVHTPKTADSQETKESQKVELSESRLKAFKVALLDVFREAHAQSIGMNRLTESINRDSEEPFSSVEIQAALSKMQDDNQVMVSEGIIFLI.

An N-acetylalanine modification is found at Ala2. Ser160 and Ser275 each carry phosphoserine. Lys293 bears the N6-acetyllysine mark. One can recognise an MCM domain in the interval Ile295 to Leu502. Residues Gln353, Leu393, Glu394, Ala395, and Ala397 each contribute to the ADP site. The Arginine finger signature appears at Ser477–Asp480. Residue Ala523 participates in ATP binding. Residue Ser535 is modified to Phosphoserine; by ATM. The residue at position 547 (Lys547) is an N6-acetyllysine. Position 611 is a phosphoserine (Ser611). The segment at Lys662–Glu738 is disordered. Arg664 provides a ligand contact to ATP. Phosphoserine occurs at positions 668 and 672. 2 stretches are compositionally biased toward acidic residues: residues Asp670–Ser681 and Ser704–Met717. Position 674 is a phosphothreonine (Thr674). The residue at position 681 (Ser681) is a Phosphoserine. Position 708 is a phosphotyrosine (Tyr708). Ser711 is subject to Phosphoserine. 3 positions are modified to phosphothreonine: Thr713, Thr722, and Thr725. The span at Asp727–Glu738 shows a compositional bias: basic and acidic residues. 2 positions are modified to phosphoserine: Ser728 and Ser734.

It belongs to the MCM family. Component of the MCM2-7 complex. The complex forms a toroidal hexameric ring with the proposed subunit order MCM2-MCM6-MCM4-MCM7-MCM3-MCM5. Component of the CMG helicase complex, a hexameric ring of related MCM2-7 subunits stabilized by CDC45 and the tetrameric GINS complex. Associated with the replication-specific DNA polymerase alpha. Interacts with MCMBP. Interacts with ANKRD17. Interacts with MCM3AP isoform MCM3AP; this interaction leads to MCM3 acetylation. In terms of processing, acetylated by MCM3AP. Post-translationally, O-glycosylated (O-GlcNAcylated), in a cell cycle-dependent manner.

It localises to the nucleus. It is found in the chromosome. It catalyses the reaction ATP + H2O = ADP + phosphate + H(+). Its function is as follows. Acts as a component of the MCM2-7 complex (MCM complex) which is the replicative helicase essential for 'once per cell cycle' DNA replication initiation and elongation in eukaryotic cells. Core component of CDC45-MCM-GINS (CMG) helicase, the molecular machine that unwinds template DNA during replication, and around which the replisome is built. The active ATPase sites in the MCM2-7 ring are formed through the interaction surfaces of two neighboring subunits such that a critical structure of a conserved arginine finger motif is provided in trans relative to the ATP-binding site of the Walker A box of the adjacent subunit. The six ATPase active sites, however, are likely to contribute differentially to the complex helicase activity. Required for the entry in S phase and for cell division. This chain is DNA replication licensing factor MCM3 (MCM3), found in Pongo abelii (Sumatran orangutan).